Consider the following 225-residue polypeptide: UPF0173 metal-dependent hydrolase Tneu_1348 (225 aa).

This sequence belongs to the UPF0173 family.

The chain is UPF0173 metal-dependent hydrolase Tneu_1348 from Pyrobaculum neutrophilum (strain DSM 2338 / JCM 9278 / NBRC 100436 / V24Sta) (Thermoproteus neutrophilus).